The chain runs to 427 residues: Peptidase B (427 aa).

Residues lysine 195 and aspartate 200 each coordinate Mn(2+). Residue lysine 207 is part of the active site. Mn(2+) contacts are provided by aspartate 218, aspartate 277, and glutamate 279. Arginine 281 is a catalytic residue.

It belongs to the peptidase M17 family. Homohexamer. Requires Mn(2+) as cofactor.

Its subcellular location is the cytoplasm. The catalysed reaction is Release of an N-terminal amino acid, Xaa, from a peptide or arylamide. Xaa is preferably Glu or Asp but may be other amino acids, including Leu, Met, His, Cys and Gln.. In terms of biological role, probably plays an important role in intracellular peptide degradation. In Escherichia coli (strain UTI89 / UPEC), this protein is Peptidase B.